The primary structure comprises 108 residues: Glutaredoxin 4 (108 aa).

The Glutaredoxin domain occupies 5 to 107 (IKKIQNQIQN…KTISICDKLN (103 aa)). Residue Lys22 coordinates glutathione. Position 30 (Cys30) interacts with [2Fe-2S] cluster. Glutathione is bound by residues Arg59, Phe71, and 84–85 (CN).

This sequence belongs to the glutaredoxin family. Monothiol subfamily. As to quaternary structure, homodimer.

It is found in the cytoplasm. Monothiol glutaredoxin involved in the biogenesis of iron-sulfur clusters. This Buchnera aphidicola subsp. Baizongia pistaciae (strain Bp) protein is Glutaredoxin 4 (grxD).